The chain runs to 281 residues: L-ornithine N(alpha)-acyltransferase (281 aa).

Belongs to the acetyltransferase family. OlsB subfamily.

It catalyses the reaction a (3R)-hydroxyacyl-[ACP] + L-ornithine = a lyso-ornithine lipid + holo-[ACP] + H(+). It participates in lipid metabolism. In terms of biological role, catalyzes the first step in the biosynthesis of ornithine lipids, which are phosphorus-free membrane lipids. Catalyzes the 3-hydroxyacyl-acyl carrier protein-dependent acylation of ornithine to form lyso-ornithine lipid (LOL). The polypeptide is L-ornithine N(alpha)-acyltransferase (Brucella abortus (strain 2308)).